Consider the following 124-residue polypeptide: Small ribosomal subunit protein bS6 (124 aa).

The segment at 96–124 (ETAPSPMMKEVQREEARKAAQTTTEGQAA) is disordered. Positions 115 to 124 (AQTTTEGQAA) are enriched in polar residues.

The protein belongs to the bacterial ribosomal protein bS6 family.

In terms of biological role, binds together with bS18 to 16S ribosomal RNA. The sequence is that of Small ribosomal subunit protein bS6 from Cupriavidus pinatubonensis (strain JMP 134 / LMG 1197) (Cupriavidus necator (strain JMP 134)).